Reading from the N-terminus, the 639-residue chain is CREB3 regulatory factor (639 aa).

Residues 302-422 (PLPQEGPGSL…SVEDLKEVTS (121 aa)) form a disordered region. The segment covering 310 to 328 (SLAAGESSSLSASTSVSDS) has biased composition (low complexity). The segment covering 339 to 351 (LFVSDNLGEQPTK) has biased composition (polar residues). A compositionally biased stretch (acidic residues) spans 355–370 (EEDEEDEEDVDDEDHD). Residues 371–380 (EGFGSEHELS) show a composition bias toward basic and acidic residues. The segment covering 381-401 (ENEEEEEEEEDYEDDKDDDIS) has biased composition (acidic residues). Residues 521–584 (TARPRSRKEK…VNRVQNPRDE (64 aa)) enclose the bZIP domain. Residues 523–532 (RPRSRKEKNK) are basic motif. The segment at 533–540 (LASRACRL) is leucine-zipper.

This sequence belongs to the bZIP family. CREBRF subfamily. Interacts (via leucine-zipper domain) with CREB3 (via leucine-zipper domain); the interaction promotes CREB3 degradation. Post-translationally, probably degraded by the proteasome.

The protein resides in the nucleus. Its function is as follows. Acts as a negative regulator of the endoplasmic reticulum stress response or unfolded protein response (UPR). Represses the transcriptional activity of CREB3 during the UPR. Recruits CREB3 into nuclear foci. The chain is CREB3 regulatory factor (CREBRF) from Homo sapiens (Human).